A 280-amino-acid polypeptide reads, in one-letter code: MIQHAGLGYRRDLAEDFLSLSENSPICFIEAAPENWLKMGGRARKQFDRVAERLPLALHGLSMSLGGQAPLDTDLIDGIKEMMCRYDCTFFSDHLSYCHDGGHLYDLLPLPFTEEMVHHTARRIREVQDRLGCRIAVENTSYYLHSPLAEMNEVEFLNAVAREADCGIHLDVNNIYVNAVNHGLLSPEAFLENVDAGRVCYIHIAGHDAETPELLIDTHGAAVLPTVWDLLELAYTKLPTIPPTLLERDFNFPPFAELEAEVAKIADYQTRAGKEYRRAA.

The protein belongs to the UPF0276 family.

The polypeptide is UPF0276 protein NGO_1946 (Neisseria gonorrhoeae (strain ATCC 700825 / FA 1090)).